A 90-amino-acid chain; its full sequence is DNA-directed RNA polymerase subunit Rpo5 (90 aa).

Belongs to the archaeal Rpo5/eukaryotic RPB5 RNA polymerase subunit family. Part of the RNA polymerase complex.

Its subcellular location is the cytoplasm. The enzyme catalyses RNA(n) + a ribonucleoside 5'-triphosphate = RNA(n+1) + diphosphate. In terms of biological role, DNA-dependent RNA polymerase (RNAP) catalyzes the transcription of DNA into RNA using the four ribonucleoside triphosphates as substrates. The protein is DNA-directed RNA polymerase subunit Rpo5 of Aeropyrum pernix (strain ATCC 700893 / DSM 11879 / JCM 9820 / NBRC 100138 / K1).